The primary structure comprises 114 residues: Large ribosomal subunit protein P2 (114 aa).

The segment covering 74-83 (AAAAGGGGGD) has biased composition (gly residues). A disordered region spans residues 74 to 114 (AAAAGGGGGDAPAAAAEEPKKEEKSEEESDEELGFSLFDDN). Residues 98 to 114 (SEEESDEELGFSLFDDN) are compositionally biased toward acidic residues.

This sequence belongs to the eukaryotic ribosomal protein P1/P2 family. As to quaternary structure, P1 and P2 exist as dimers at the large ribosomal subunit. Phosphorylated.

In terms of biological role, plays an important role in the elongation step of protein synthesis. In Parthenium argentatum (Guayule rubber plant), this protein is Large ribosomal subunit protein P2.